The primary structure comprises 440 residues: Nuclear hormone receptor family member nhr-130 (440 aa).

Positions 34-110 (LYTCQVCALP…VGMDPGRFQF (77 aa)) form a DNA-binding region, nuclear receptor. 2 NR C4-type zinc fingers span residues 37–57 (CQVC…CRAC) and 74–93 (CKKQ…CKKC). In terms of domain architecture, NR LBD spans 184–439 (EKPLIARNNL…FSHPEMFEDT (256 aa)).

Belongs to the nuclear hormone receptor family.

It is found in the nucleus. Orphan nuclear receptor. This is Nuclear hormone receptor family member nhr-130 (nhr-130) from Caenorhabditis elegans.